Here is a 267-residue protein sequence, read N- to C-terminus: MSSAPLVGYSSSGSEDEAEAVAAGRSKPGTGFHRCGQNPVPSEKLPVPDSVLSMFPSTEEGPEDDSAKHGGRIRTFPHERGNWATHIYIPYEAKEDFRDLLDALLPRAQMFVPRLVLMEEFHVSLSQSVVLRHHWILPFVQVLKDRMASFQRFFFTANRVKIYTNQEKTRTFIGLEVSSGHAQFLDLVSEVDRAMKEFDLTTFYQDPSFHISLAWCVGDASLQLEGQCLQELQEIVDEFEDSEMLLRVLANQVRCKSGNKFFSMPLK.

A compositionally biased stretch (polar residues) spans 1-13 (MSSAPLVGYSSSG). The segment at 1–74 (MSSAPLVGYS…DSAKHGGRIR (74 aa)) is disordered. H122 serves as the catalytic Proton acceptor. Position 122 to 124 (122 to 124 (HVS)) interacts with AMP. UMP contacts are provided by residues Q166, Y204, and 208–212 (SFHIS). Residues Y204 and 206–212 (DPSFHIS) contribute to the AMP site. H210 acts as the Proton donor in catalysis.

It belongs to the 2H phosphoesterase superfamily. USB1 family. As to quaternary structure, interacts with PLRG1, CDC5L and PRPF19.

It localises to the nucleus. The catalysed reaction is a 3'-end uridylyl-uridine-RNA = a 3'-end 2',3'-cyclophospho-uridine-RNA + uridine. The enzyme catalyses a 3'-end uridylyl-adenosine-RNA = a 3'-end 2',3'-cyclophospho-uridine-RNA + adenosine. In terms of biological role, 3'-5' RNA exonuclease that trims the 3' end of oligo(U) and oligo(A) tracts of the pre-U6 small nuclear RNA (snRNA) molecule, leading to the formation of a mature U6 snRNA 3' end-terminated with a 2',3'-cyclic phosphate. Participates in the U6 snRNA 3' end processing that prevents U6 snRNA degradation. In addition also removes uridines from the 3' end of U6atac snRNA and possibly the vault RNA VTRNA1-1. The protein is U6 snRNA phosphodiesterase 1 of Mus musculus (Mouse).